The following is a 323-amino-acid chain: Aldo-keto reductase family 1 member C4 (323 aa).

NADP(+) contacts are provided by residues 20-24 and Asp-50; that span reads GFGTY. Tyr-55 functions as the Proton donor in the catalytic mechanism. His-117 serves as a coordination point for substrate. Residues 166–167, Gln-190, 216–221, and 270–280 contribute to the NADP(+) site; these read SN, HSALGT, and KSYNEQRIREN.

The protein belongs to the aldo/keto reductase family. In terms of assembly, monomer. Post-translationally, the N-terminus is blocked. In terms of tissue distribution, liver specific.

Its subcellular location is the cytoplasm. It is found in the cytosol. The enzyme catalyses a 3alpha-hydroxysteroid + NADP(+) = a 3-oxosteroid + NADPH + H(+). The catalysed reaction is a 3alpha-hydroxysteroid + NAD(+) = a 3-oxosteroid + NADH + H(+). It carries out the reaction 5alpha-androstane-3alpha,17beta-diol + NADP(+) = 17beta-hydroxy-5alpha-androstan-3-one + NADPH + H(+). It catalyses the reaction 5alpha-androstane-3beta,17beta-diol + NADP(+) = 17beta-hydroxy-5alpha-androstan-3-one + NADPH + H(+). The enzyme catalyses 5alpha-androstane-3alpha,17beta-diol + NAD(+) = 17beta-hydroxy-5alpha-androstan-3-one + NADH + H(+). The catalysed reaction is 17beta-estradiol + NADP(+) = estrone + NADPH + H(+). It carries out the reaction 17beta-estradiol + NAD(+) = estrone + NADH + H(+). It catalyses the reaction (20S)-hydroxypregn-4-en-3-one + NADP(+) = progesterone + NADPH + H(+). The enzyme catalyses (20S)-hydroxypregn-4-en-3-one + NAD(+) = progesterone + NADH + H(+). The catalysed reaction is androsterone + NADP(+) = 5alpha-androstan-3,17-dione + NADPH + H(+). It carries out the reaction testosterone + NADP(+) = androst-4-ene-3,17-dione + NADPH + H(+). It catalyses the reaction testosterone + NAD(+) = androst-4-ene-3,17-dione + NADH + H(+). The enzyme catalyses 3alpha-hydroxy-5alpha-androstane 17-O-(beta-D-glucuronate) + NADP(+) = 5alpha-dihydrotestosterone 17-O-(beta-D-glucuronate) + NADPH + H(+). The catalysed reaction is (3beta,5alpha,17beta)-3-hydroxy-androstan-17-yl sulfate + NADP(+) = 5alpha-dihydrotestosterone sulfate + NADPH + H(+). It carries out the reaction 5alpha-androstane-3alpha,17beta-diol + NAD(+) = androsterone + NADH + H(+). It catalyses the reaction chlordecone alcohol + NADP(+) = chlordecone + NADPH + H(+). Its pathway is steroid metabolism. With respect to regulation, inhibited by nonsteroidal the anti-inflammatory drugs (NSAID) flufenamic. The oxidation reaction is inhibited by low micromolar concentrations of NADPH. Functionally, cytosolic aldo-keto reductase that catalyzes the NADH and NADPH-dependent reduction of ketosteroids to hydroxysteroids. Liver specific enzyme that acts as an NAD(P)(H)-dependent 3-, 17- and 20-ketosteroid reductase on the steroid nucleus and side chain. Displays the ability to catalyze both oxidation and reduction in vitro, but most probably acts as a reductase in vivo since the oxidase activity measured in vitro is inhibited by physiological concentration of NADPH. Acts preferentially as a 3-alpha-hydroxysteroid dehydrogenase (HSD) with a subsidiary 3-beta-HSD activity. Catalyzes efficiently the transformation of the potent androgen 5-alpha-dihydrotestosterone (5alpha-DHT or 17beta-hydroxy-5alpha-androstan-3-one) into the less active form, 5-alpha-androstan-3-alpha,17-beta-diol (3-alpha-diol). Catalyzes the reduction of estrone into 17beta-estradiol but with low efficiency. Metabolizes a broad spectrum of natural and synthetic therapeutic steroid and plays an important role in metabolism of androgens, estrogens, progestereone and conjugated steroids. Catalyzes the biotransformation of the pesticide chlordecone (kepone) to its corresponding alcohol leading to increased biliary excretion of the pesticide and concomitant reduction of its neurotoxicity since bile is the major excretory route. This Homo sapiens (Human) protein is Aldo-keto reductase family 1 member C4 (AKR1C4).